The following is a 676-amino-acid chain: Ion-translocating oxidoreductase complex subunit C (676 aa).

4Fe-4S ferredoxin-type domains follow at residues 369 to 397 (GEPQ…QQLY) and 407 to 436 (KATT…VQYF). Residues Cys-377, Cys-380, Cys-383, Cys-387, Cys-416, Cys-419, Cys-422, and Cys-426 each contribute to the [4Fe-4S] cluster site. Positions 600–652 (ARKLEQQQANAEPEQQVDPRKAAVEAAIARAKARKLEQQQANAEPEEQVDPRK) are disordered. Positions 605–615 (QQQANAEPEQQ) are enriched in low complexity.

This sequence belongs to the 4Fe4S bacterial-type ferredoxin family. RnfC subfamily. The complex is composed of six subunits: RsxA, RsxB, RsxC, RsxD, RsxE and RsxG. It depends on [4Fe-4S] cluster as a cofactor.

The protein localises to the cell inner membrane. Functionally, part of a membrane-bound complex that couples electron transfer with translocation of ions across the membrane. Required to maintain the reduced state of SoxR. The sequence is that of Ion-translocating oxidoreductase complex subunit C from Escherichia coli (strain SMS-3-5 / SECEC).